A 395-amino-acid chain; its full sequence is Probable G-protein coupled receptor npr-29 (395 aa).

4 helical membrane-spanning segments follow: residues 38–58, 66–86, 89–109, and 148–168; these read VVGF…LFAP, ILFY…AMLL, IELV…YLIF, and AIIQ…PVFA. N-linked (GlcNAc...) asparagine glycosylation occurs at Asn-180. The next 3 helical transmembrane spans lie at 202 to 222, 252 to 272, and 287 to 307; these read FWFN…GIIY, VITT…PYWV, and IIII…AYPL.

It belongs to the G-protein coupled receptor 1 family.

It localises to the cell membrane. Its function is as follows. Not known. Putative receptor. The chain is Probable G-protein coupled receptor npr-29 from Caenorhabditis elegans.